The sequence spans 362 residues: Shewanella-like protein phosphatase 1 (362 aa).

A signal peptide spans 1–23 (MIFKKALYILLFLYIAIVKKGES). The Mn(2+) site is built by aspartate 65, histidine 67, aspartate 101, and asparagine 136. The active-site Proton donor is histidine 137. Histidine 196 contacts Mn(2+).

The protein belongs to the metallophosphoesterase superfamily. SLP family. The cofactor is Mn(2+).

Its function is as follows. Phosphatase which plays an essential role in the development and differentiation of the ookinete and in the formation of ookinete micronemes. The polypeptide is Shewanella-like protein phosphatase 1 (Plasmodium berghei (strain Anka)).